Reading from the N-terminus, the 247-residue chain is C-type lectin domain family 7 member A (247 aa).

Topologically, residues 1–44 (MEYHPDLENLDEDGYTQLHFDSQSNTRIAVVSEKGSCAASPPWR) are cytoplasmic. An ITAM-like motif is present at residues 15-18 (YTQL). A helical; Signal-anchor for type II membrane protein transmembrane segment spans residues 45 to 65 (LIAVILGILCLVILVIAVVLG). Residues 66–247 (TMAIWRSNSG…YSICEKKFSM (182 aa)) lie on the Extracellular side of the membrane. Asn-91 is a glycosylation site (N-linked (GlcNAc...) asparagine). 3 disulfide bridges follow: Cys-120–Cys-131, Cys-148–Cys-241, and Cys-220–Cys-233. The C-type lectin domain maps to 127 to 242 (YEKSCYLFSM…CSVPSYSICE (116 aa)). 146–153 (RQCWQLGS) serves as a coordination point for (1,3-beta-D-glucosyl)n. Residues Lys-157, Asp-159, and Glu-163 each contribute to the a divalent metal cation site. Glu-195 contributes to the (1,3-beta-D-glucosyl)n binding site. Residue Glu-242 coordinates a divalent metal cation.

As to quaternary structure, homodimer. Interacts with SYK; participates in leukocyte activation in presence of fungal pathogens. Interacts with CD37; this interaction controls CLEC7A-mediated IL-6 production. In terms of assembly, interacts with RANBP9. In terms of processing, phosphorylated on tyrosine residues in response to beta-glucan binding. In terms of tissue distribution, highly expressed in peripheral blood leukocytes and dendritic cells. Detected in spleen, bone marrow, lung, muscle, stomach and placenta.

It is found in the cell membrane. The protein localises to the cytoplasm. Lectin that functions as a pattern recognizing receptor (PRR) specific for beta-1,3-linked and beta-1,6-linked glucans, which constitute cell wall constituents from pathogenic bacteria and fungi. Necessary for the TLR2-mediated inflammatory response and activation of NF-kappa-B: upon beta-glucan binding, recruits SYK via its ITAM motif and promotes a signaling cascade that activates some CARD domain-BCL10-MALT1 (CBM) signalosomes, leading to the activation of NF-kappa-B and MAP kinase p38 (MAPK11, MAPK12, MAPK13 and/or MAPK14) pathways which stimulate expression of genes encoding pro-inflammatory cytokines and chemokines. Enhances cytokine production in macrophages and dendritic cells. Mediates production of reactive oxygen species in the cell. Mediates phagocytosis of C.albicans conidia. Binds T-cells in a way that does not involve their surface glycans and plays a role in T-cell activation. Stimulates T-cell proliferation. Induces phosphorylation of SCIMP after binding beta-glucans. This is C-type lectin domain family 7 member A from Homo sapiens (Human).